The sequence spans 117 residues: NADH-ubiquinone oxidoreductase chain 3 (117 aa).

3 helical membrane passes run methionine 1–leucine 21, phenylalanine 57–methionine 77, and leucine 86–histidine 106.

It belongs to the complex I subunit 3 family.

The protein resides in the mitochondrion membrane. It catalyses the reaction a ubiquinone + NADH + 5 H(+)(in) = a ubiquinol + NAD(+) + 4 H(+)(out). Core subunit of the mitochondrial membrane respiratory chain NADH dehydrogenase (Complex I) that is believed to belong to the minimal assembly required for catalysis. Complex I functions in the transfer of electrons from NADH to the respiratory chain. The immediate electron acceptor for the enzyme is believed to be ubiquinone. This chain is NADH-ubiquinone oxidoreductase chain 3 (ND3), found in Anopheles quadrimaculatus (Common malaria mosquito).